A 111-amino-acid chain; its full sequence is Putative pterin-4-alpha-carbinolamine dehydratase (111 aa).

It belongs to the pterin-4-alpha-carbinolamine dehydratase family.

The catalysed reaction is (4aS,6R)-4a-hydroxy-L-erythro-5,6,7,8-tetrahydrobiopterin = (6R)-L-erythro-6,7-dihydrobiopterin + H2O. The chain is Putative pterin-4-alpha-carbinolamine dehydratase from Chlorobaculum tepidum (strain ATCC 49652 / DSM 12025 / NBRC 103806 / TLS) (Chlorobium tepidum).